Reading from the N-terminus, the 466-residue chain is Ribulose bisphosphate carboxylase large chain (466 aa).

Lys-5 is subject to N6,N6,N6-trimethyllysine. Residues Asn-114 and Thr-164 each coordinate substrate. Catalysis depends on Lys-166, which acts as the Proton acceptor. Lys-168 provides a ligand contact to substrate. Lys-192, Asp-194, and Glu-195 together coordinate Mg(2+). At Lys-192 the chain carries N6-carboxylysine. His-285 serves as the catalytic Proton acceptor. Substrate contacts are provided by Arg-286, His-318, and Ser-370.

Belongs to the RuBisCO large chain family. Type I subfamily. Heterohexadecamer of 8 large chains and 8 small chains; disulfide-linked. The disulfide link is formed within the large subunit homodimers. Mg(2+) serves as cofactor. The disulfide bond which can form in the large chain dimeric partners within the hexadecamer appears to be associated with oxidative stress and protein turnover.

The protein resides in the plastid. It localises to the chloroplast. The enzyme catalyses 2 (2R)-3-phosphoglycerate + 2 H(+) = D-ribulose 1,5-bisphosphate + CO2 + H2O. It carries out the reaction D-ribulose 1,5-bisphosphate + O2 = 2-phosphoglycolate + (2R)-3-phosphoglycerate + 2 H(+). RuBisCO catalyzes two reactions: the carboxylation of D-ribulose 1,5-bisphosphate, the primary event in carbon dioxide fixation, as well as the oxidative fragmentation of the pentose substrate in the photorespiration process. Both reactions occur simultaneously and in competition at the same active site. This Cucurbita pepo (Vegetable marrow) protein is Ribulose bisphosphate carboxylase large chain.